We begin with the raw amino-acid sequence, 330 residues long: Putative F-box protein At1g57690 (330 aa).

The F-box domain occupies 25–72 (VDIISSLPDVILQHILFSFQTKYAIRTSVLSKRWRHEADAINKALSQY).

The sequence is that of Putative F-box protein At1g57690 from Arabidopsis thaliana (Mouse-ear cress).